The following is a 433-amino-acid chain: GTPase Obg (433 aa).

The region spanning 1–159 (MKFVDSADLI…FEIRAELKVL (159 aa)) is the Obg domain. In terms of domain architecture, OBG-type G spans 160–332 (ADVGFVGLPN…LLFMIYEELK (173 aa)). GTP-binding positions include 166–173 (GLPNAGKS), 191–195 (FTTIT), 213–216 (DLPG), 284–287 (NKMD), and 313–315 (SGL). Mg(2+)-binding residues include Ser-173 and Thr-193. An OCT domain is found at 355 to 433 (KFEEQKEDIQ…VFDYELEWTD (79 aa)).

This sequence belongs to the TRAFAC class OBG-HflX-like GTPase superfamily. OBG GTPase family. In terms of assembly, monomer. Mg(2+) serves as cofactor.

The protein localises to the cytoplasm. Functionally, an essential GTPase which binds GTP, GDP and possibly (p)ppGpp with moderate affinity, with high nucleotide exchange rates and a fairly low GTP hydrolysis rate. Plays a role in control of the cell cycle, stress response, ribosome biogenesis and in those bacteria that undergo differentiation, in morphogenesis control. The polypeptide is GTPase Obg (Mycoplasma mycoides subsp. mycoides SC (strain CCUG 32753 / NCTC 10114 / PG1)).